The following is a 371-amino-acid chain: Undecaprenyl-diphosphatase 1 (371 aa).

3 consecutive transmembrane segments (helical) span residues 53 to 73 (PYLA…IVAF), 100 to 120 (LAWL…LLEH), and 126 to 146 (LGRP…MLLG). Residues 152-226 (RSTTRGAPGP…PEAEDVTLPE (75 aa)) form a disordered region. Transmembrane regions (helical) follow at residues 291 to 311 (FAFL…LPDL), 322 to 342 (QTLF…RFLA), and 351 to 371 (TPFA…FGIF).

It belongs to the UppP family.

It is found in the cell membrane. It catalyses the reaction di-trans,octa-cis-undecaprenyl diphosphate + H2O = di-trans,octa-cis-undecaprenyl phosphate + phosphate + H(+). Its function is as follows. Catalyzes the dephosphorylation of undecaprenyl diphosphate (UPP). Confers resistance to bacitracin. The chain is Undecaprenyl-diphosphatase 1 from Frankia casuarinae (strain DSM 45818 / CECT 9043 / HFP020203 / CcI3).